A 117-amino-acid polypeptide reads, in one-letter code: MTRIKRGYIARRRRTKLRLFASSFRGAHSRLTRTMTQQRIRALVSAHRDRGKRKRDFRRLWITRINAVIHEMGVFYSYNQFIHNLYKKQLLLNRKILAQIALLNRSCLYTISNEIKE.

The protein belongs to the bacterial ribosomal protein bL20 family.

It is found in the plastid. The protein resides in the chloroplast. Its function is as follows. Binds directly to 23S ribosomal RNA and is necessary for the in vitro assembly process of the 50S ribosomal subunit. It is not involved in the protein synthesizing functions of that subunit. The sequence is that of Large ribosomal subunit protein bL20c from Barbarea verna (Land cress).